The primary structure comprises 455 residues: Phosphoglucosamine mutase (455 aa).

Ser108 serves as the catalytic Phosphoserine intermediate. Positions 108, 248, 250, and 252 each coordinate Mg(2+). At Ser108 the chain carries Phosphoserine.

The protein belongs to the phosphohexose mutase family. Mg(2+) serves as cofactor. Activated by phosphorylation.

It carries out the reaction alpha-D-glucosamine 1-phosphate = D-glucosamine 6-phosphate. Functionally, catalyzes the conversion of glucosamine-6-phosphate to glucosamine-1-phosphate. The polypeptide is Phosphoglucosamine mutase (Leuconostoc mesenteroides subsp. mesenteroides (strain ATCC 8293 / DSM 20343 / BCRC 11652 / CCM 1803 / JCM 6124 / NCDO 523 / NBRC 100496 / NCIMB 8023 / NCTC 12954 / NRRL B-1118 / 37Y)).